We begin with the raw amino-acid sequence, 486 residues long: Cardiolipin synthase A (486 aa).

The next 2 helical transmembrane spans lie at 3 to 23 (TFYT…IAGV) and 38 to 58 (MTWL…YFAF). 2 PLD phosphodiesterase domains span residues 219–246 (MDLR…VDPR) and 399–426 (EDGL…DMRS). Active-site residues include H224, K226, D231, H404, K406, and D411.

It belongs to the phospholipase D family. Cardiolipin synthase subfamily. ClsA sub-subfamily.

The protein resides in the cell inner membrane. It carries out the reaction 2 a 1,2-diacyl-sn-glycero-3-phospho-(1'-sn-glycerol) = a cardiolipin + glycerol. Catalyzes the reversible phosphatidyl group transfer from one phosphatidylglycerol molecule to another to form cardiolipin (CL) (diphosphatidylglycerol) and glycerol. The sequence is that of Cardiolipin synthase A from Proteus mirabilis (strain HI4320).